We begin with the raw amino-acid sequence, 119 residues long: Large ribosomal subunit protein uL18 (119 aa).

Positions 54-76 are disordered; that stretch reads LTSASTLADDVEGETPTEESRSV.

Belongs to the universal ribosomal protein uL18 family. Part of the 50S ribosomal subunit; part of the 5S rRNA/L5/L18/L25 subcomplex. Contacts the 5S and 23S rRNAs.

In terms of biological role, this is one of the proteins that bind and probably mediate the attachment of the 5S RNA into the large ribosomal subunit, where it forms part of the central protuberance. This chain is Large ribosomal subunit protein uL18, found in Salinibacter ruber (strain DSM 13855 / M31).